The following is a 117-amino-acid chain: Immunoglobulin heavy variable 3-30-3 (117 aa).

The N-terminal stretch at 1–19 (MEFGLSWVFLVALLRGVQC) is a signal peptide. The residue at position 20 (glutamine 20) is a Pyrrolidone carboxylic acid. The segment at 20–44 (QVQLVESGGGVVQPGRSLRLSCAAS) is framework-1. Residues 20–117 (QVQLVESGGG…EDTAVYYCAR (98 aa)) enclose the Ig-like domain. Residues cysteine 41 and cysteine 115 are joined by a disulfide bond. The complementarity-determining-1 stretch occupies residues 45–52 (GFTFSSYA). Residues 53 to 69 (MHWVRQAPGKGLEWVAV) form a framework-2 region. Positions 70-77 (ISYDGSNK) are complementarity-determining-2. Residues 78 to 115 (YYADSVKGRFTISRDNSKNTLYLQMNSLRAEDTAVYYC) form a framework-3 region. The interval 116–117 (AR) is complementarity-determining-3.

As to quaternary structure, immunoglobulins are composed of two identical heavy chains and two identical light chains; disulfide-linked.

It localises to the secreted. It is found in the cell membrane. V region of the variable domain of immunoglobulin heavy chains that participates in the antigen recognition. Immunoglobulins, also known as antibodies, are membrane-bound or secreted glycoproteins produced by B lymphocytes. In the recognition phase of humoral immunity, the membrane-bound immunoglobulins serve as receptors which, upon binding of a specific antigen, trigger the clonal expansion and differentiation of B lymphocytes into immunoglobulins-secreting plasma cells. Secreted immunoglobulins mediate the effector phase of humoral immunity, which results in the elimination of bound antigens. The antigen binding site is formed by the variable domain of one heavy chain, together with that of its associated light chain. Thus, each immunoglobulin has two antigen binding sites with remarkable affinity for a particular antigen. The variable domains are assembled by a process called V-(D)-J rearrangement and can then be subjected to somatic hypermutations which, after exposure to antigen and selection, allow affinity maturation for a particular antigen. This Homo sapiens (Human) protein is Immunoglobulin heavy variable 3-30-3.